We begin with the raw amino-acid sequence, 2493 residues long: Adenylate cyclase (2493 aa).

Composition is skewed to polar residues over residues 1–18, 42–51, 60–78, 129–147, and 197–210; these read MLFTMQFTTRSTVASPEQ, RDSNGSSNFT, SQQYDDTSTNSFHSSQPDI, PANSHSDSLPGPSTHSISP, and APFSSSHSNRTSVN. Disordered stretches follow at residues 1-85, 99-148, 197-325, 355-444, 475-565, 616-660, 753-832, 854-882, and 904-967; these read MLFT…SSTL, FEHA…ISPS, APFS…SSLS, NSPS…QSQS, GSIT…VNML, QAPV…KTSY, NVGE…GSKS, ALVQQQSQSQNHHQPSPNVRPTSRGGAGA, and RPSK…ATGT. A compositionally biased stretch (low complexity) spans 211–233; it reads PSAASTASPSTSAATRTRPRGGT. 2 stretches are compositionally biased toward polar residues: residues 234-246 and 253-264; these read NASQYNTLDTSFG and LSSSRSQYSLRP. 2 stretches are compositionally biased toward basic residues: residues 287 to 303 and 404 to 422; these read AVKKTRNPFGFLKKKSS and HLKKDPRKRIKGVRHHLAK. Basic and acidic residues predominate over residues 425–434; the sequence is KPGEDADSAR. Positions 500–525 are enriched in polar residues; the sequence is PSPSQTPIAERQTSVTSTVESPSHAS. Low complexity predominate over residues 534 to 555; the sequence is SLRTPSRTTASTSTSSASTVLS. A compositionally biased stretch (basic and acidic residues) spans 630–640; sequence TDSELSDRKDS. Polar residues predominate over residues 641-660; it reads VVSTHSMRSNHSGISPKTSY. Residues 754 to 763 are compositionally biased toward acidic residues; sequence VGEEEDDDDD. Low complexity-rich tracts occupy residues 780 to 791 and 854 to 870; these read SSSGISSTHASS and ALVQQQSQSQNHHQPSP. Polar residues predominate over residues 913–935; the sequence is RPNTAGSVGATRPSTTTLGSTLS. Residues 970-1072 form the Ras-associating domain; the sequence is RNHFIRVYKT…LRFVFRPDSV (103 aa). 22 LRR repeats span residues 1086–1107, 1110–1132, 1134–1155, 1157–1178, 1181–1202, 1204–1225, 1227–1248, 1250–1271, 1273–1294, 1295–1316, 1317–1336, 1339–1360, 1363–1385, 1386–1407, 1409–1430, 1432–1453, 1511–1534, 1535–1556, 1559–1580, 1583–1605, 1606–1628, and 1635–1654; these read TFQHLDLHSRNLEMVPIFLYKH, WIVSLDLSGNPMSDLPLDFVQLC, SLRTLRLSNLALKRIPQSVRHS, TLTHLDVSNNRIVELAHVSLDL, ELMSLKVQNNRLFDLPSYFSSI, TLRNLNISNNRFEEFPKVICDV, SLVDLDVSFNSITELPAEIANL, NLERFILAGNELEKLPDSMSEL, SLRTIDLRRNKVQDVSSLLGLP, RLQNIQAESNNIKSFEATLGPQ, LTQVELGRNPLSKVRIAALT, DLTSLDLSSTNMTRLEEGLFPQ, ALVKLTLDGNQLVVLPDTLGDLK, RLEMLSCSNNLLATLPESIGDL, ALKELLVHNNNLKTLPQTLWLC, SLAHINLSSNLLESFPAVPDIR, SLQKLRLGDNRLGDDVFSVLSELT, SLEVLNLSFNEIFEIPDFSLQT, KLRELYISGNQLSTIPSDDLVV, ELRILHLNCNKLTTLPTELGKLK, KLANLDVGNNVLKYNIANWHYDW, and ELRYLNLSGNTRLEIKTKLS. Residues 1710-2000 enclose the PPM-type phosphatase domain; the sequence is AYGIADALGK…ESIMVMVISV (291 aa). Residues 2058-2194 enclose the Guanylate cyclase domain; sequence ALVFTDIKNS…PMVNRAARIS (137 aa). Mg(2+) contacts are provided by Asp-2063 and Asp-2105. Disordered stretches follow at residues 2220–2241, 2354–2378, and 2467–2493; these read DESSTAGGAGGEGENLEKTEEE, EADRSQPSTPLDDNGRNPIDGHGTA, and PPRASTSALSLPSPRTSPRNRLLELVP. A compositionally biased stretch (polar residues) spans 2470 to 2485; it reads ASTSALSLPSPRTSPR.

The protein belongs to the adenylyl cyclase class-3 family. Mg(2+) serves as cofactor.

It catalyses the reaction ATP = 3',5'-cyclic AMP + diphosphate. Its function is as follows. Plays essential roles in regulation of cellular metabolism by catalyzing the synthesis of a second messenger, cAMP. The protein is Adenylate cyclase (UAC1) of Mycosarcoma maydis (Corn smut fungus).